The primary structure comprises 429 residues: Histidine--tRNA ligase (429 aa).

The protein belongs to the class-II aminoacyl-tRNA synthetase family. As to quaternary structure, homodimer.

It is found in the cytoplasm. It catalyses the reaction tRNA(His) + L-histidine + ATP = L-histidyl-tRNA(His) + AMP + diphosphate + H(+). This is Histidine--tRNA ligase from Alkalilimnicola ehrlichii (strain ATCC BAA-1101 / DSM 17681 / MLHE-1).